The following is a 475-amino-acid chain: Ribulose bisphosphate carboxylase large chain (475 aa).

The propeptide occupies M1–S2. The residue at position 3 (P3) is an N-acetylproline. N6,N6,N6-trimethyllysine is present on K14. Substrate-binding residues include N123 and T173. Residue K175 is the Proton acceptor of the active site. K177 lines the substrate pocket. Mg(2+) contacts are provided by K201, D203, and E204. N6-carboxylysine is present on K201. Residue H294 is the Proton acceptor of the active site. R295, H327, and S379 together coordinate substrate.

This sequence belongs to the RuBisCO large chain family. Type I subfamily. In terms of assembly, heterohexadecamer of 8 large chains and 8 small chains; disulfide-linked. The disulfide link is formed within the large subunit homodimers. Mg(2+) is required as a cofactor. In terms of processing, the disulfide bond which can form in the large chain dimeric partners within the hexadecamer appears to be associated with oxidative stress and protein turnover.

The protein localises to the plastid. It is found in the chloroplast. The enzyme catalyses 2 (2R)-3-phosphoglycerate + 2 H(+) = D-ribulose 1,5-bisphosphate + CO2 + H2O. It carries out the reaction D-ribulose 1,5-bisphosphate + O2 = 2-phosphoglycolate + (2R)-3-phosphoglycerate + 2 H(+). Functionally, ruBisCO catalyzes two reactions: the carboxylation of D-ribulose 1,5-bisphosphate, the primary event in carbon dioxide fixation, as well as the oxidative fragmentation of the pentose substrate in the photorespiration process. Both reactions occur simultaneously and in competition at the same active site. The protein is Ribulose bisphosphate carboxylase large chain of Cerastium glomeratum (Sticky chickweed).